The chain runs to 152 residues: Xanthine-guanine phosphoribosyltransferase (152 aa).

5-phospho-alpha-D-ribose 1-diphosphate-binding positions include 37 to 38 (RG), Arg-69, and 88 to 96 (DDLVDTGGT). Arg-69 contributes to the GMP binding site. Asp-89 serves as a coordination point for Mg(2+). Residues Asp-92 and Ile-135 each contribute to the guanine site. Xanthine contacts are provided by Asp-92 and Ile-135. Residues 92-96 (DTGGT) and 134-135 (WI) each bind GMP.

This sequence belongs to the purine/pyrimidine phosphoribosyltransferase family. XGPT subfamily. Homotetramer. Requires Mg(2+) as cofactor.

It is found in the cell inner membrane. It carries out the reaction GMP + diphosphate = guanine + 5-phospho-alpha-D-ribose 1-diphosphate. The catalysed reaction is XMP + diphosphate = xanthine + 5-phospho-alpha-D-ribose 1-diphosphate. The enzyme catalyses IMP + diphosphate = hypoxanthine + 5-phospho-alpha-D-ribose 1-diphosphate. It functions in the pathway purine metabolism; GMP biosynthesis via salvage pathway; GMP from guanine: step 1/1. It participates in purine metabolism; XMP biosynthesis via salvage pathway; XMP from xanthine: step 1/1. Purine salvage pathway enzyme that catalyzes the transfer of the ribosyl-5-phosphate group from 5-phospho-alpha-D-ribose 1-diphosphate (PRPP) to the N9 position of the 6-oxopurines guanine and xanthine to form the corresponding ribonucleotides GMP (guanosine 5'-monophosphate) and XMP (xanthosine 5'-monophosphate), with the release of PPi. To a lesser extent, also acts on hypoxanthine. The chain is Xanthine-guanine phosphoribosyltransferase from Escherichia coli O7:K1 (strain IAI39 / ExPEC).